A 558-amino-acid polypeptide reads, in one-letter code: N-terminal histidine N-methyltransferase (558 aa).

The Cytoplasmic segment spans residues 1 to 15 (MAPFRSIYEKDATKK). The helical transmembrane segment at 16–32 (LVVGAALLVLAAFYSYV) threads the bilayer. The Lumenal portion of the chain corresponds to 33–49 (FLLTLAPVYGSTPSHIF). The chain crosses the membrane as a helical span at residues 50-65 (HGYGVGIAGVAGWFSK). Topologically, residues 66-77 (DIVDRVSGRKAI) are cytoplasmic. Residues 78-96 (YAIPVLAFFLPVVQYFVSQ) traverse the membrane as a helical segment. Over 97–104 (QSSALGNP) the chain is Lumenal. A helical transmembrane segment spans residues 105–131 (AGPIFTEVLALYPLVLLSVACAGKLVQ). Topologically, residues 132-145 (AGLNLQRHGDLVAE) are cytoplasmic. The helical transmembrane segment at 146 to 169 (HIPLLGSYVIYSAGEHLIKAFLSR) threads the bilayer. Residues 170–172 (FIG) lie on the Lumenal side of the membrane. A helical transmembrane segment spans residues 173–194 (STVLLSRAGLQILIAIFYAAAV). At 195 to 197 (PSK) the chain is on the cytoplasmic side. The helical transmembrane segment at 198 to 215 (ALLLAIPAFLFSVTSNTH) threads the bilayer. Residues 216-558 (LPLGHTTTAL…VLPDRVWEGW (343 aa)) lie on the Lumenal side of the membrane.

This sequence belongs to the methyltransferase superfamily.

The protein resides in the endoplasmic reticulum membrane. The catalysed reaction is L-histidyl-[protein] + S-adenosyl-L-methionine = N(tele)-methyl-L-histidyl-[protein] + S-adenosyl-L-homocysteine + H(+). Its function is as follows. Protein-histidine N-methyltransferase that specifically mediates 3-methylhistidine (tele-methylhistidine) methylation at 'His-1', which protects the side-chain from oxidative damage. Methylates lytic polysaccharide monooxygenases (LPMOs) destined for secretion, including AN4702. The protein is N-terminal histidine N-methyltransferase of Emericella nidulans (strain FGSC A4 / ATCC 38163 / CBS 112.46 / NRRL 194 / M139) (Aspergillus nidulans).